Reading from the N-terminus, the 986-residue chain is Ankyrin repeat, PH and SEC7 domain containing protein secG (986 aa).

Over residues 1–28 (MGSTSNSTKNTGSTTTTTTTAAPATTAK) the composition is skewed to low complexity. Positions 1 to 43 (MGSTSNSTKNTGSTTTTTTTAAPATTAKHSNSAPTRPSVHYYS) are disordered. Residues 29–43 (HSNSAPTRPSVHYYS) show a composition bias toward polar residues. ANK repeat units follow at residues 34-63 (PTRP…TSPD), 68-97 (EKRT…NANI), 101-131 (AGNT…DVNT), 135-164 (KNGT…DPRA), 168-197 (NGET…KVNA), 201-230 (DCIT…KVDP), 234-263 (HGIS…NINC), 267-296 (EGVT…KINM), 300-329 (MGET…TMID), 334-363 (RQST…QINI), 367-396 (EGAT…PICI), 400-429 (QGAT…ELEV), 433-462 (QGGT…NVNA), 466-495 (HSST…RIDA), and 499-528 (AGKT…DLDQ). An SEC7 domain is found at 580–770 (QLAAEKQKLL…ENLYDKIVTN (191 aa)). The PH domain occupies 784 to 895 (HVEKKGWLTK…WVQSIKSNIH (112 aa)). The segment at 911-986 (IRGRGKVSTK…PVQQQTSALS (76 aa)) is disordered. The span at 920–929 (KPIQNRKQTI) shows a compositional bias: polar residues. Low complexity-rich tracts occupy residues 936-953 (TTTT…SVGS) and 963-986 (SSGS…SALS).

The sequence is that of Ankyrin repeat, PH and SEC7 domain containing protein secG (secG) from Dictyostelium discoideum (Social amoeba).